The sequence spans 194 residues: Molybdenum cofactor guanylyltransferase (194 aa).

GTP is bound by residues 12–14 (LAG), Lys-25, Asn-53, Asp-70, and Asp-100. A Mg(2+)-binding site is contributed by Asp-100.

The protein belongs to the MobA family. In terms of assembly, monomer. It depends on Mg(2+) as a cofactor.

The protein resides in the cytoplasm. It catalyses the reaction Mo-molybdopterin + GTP + H(+) = Mo-molybdopterin guanine dinucleotide + diphosphate. Transfers a GMP moiety from GTP to Mo-molybdopterin (Mo-MPT) cofactor (Moco or molybdenum cofactor) to form Mo-molybdopterin guanine dinucleotide (Mo-MGD) cofactor. The chain is Molybdenum cofactor guanylyltransferase from Aliivibrio fischeri (strain MJ11) (Vibrio fischeri).